We begin with the raw amino-acid sequence, 437 residues long: Peptidyl-prolyl cis-trans isomerase CYP38, chloroplastic (437 aa).

Residues 1–36 constitute a chloroplast transit peptide; that stretch reads MAAAFASLPTFSVVNSSRFPRRRIGFSCSKKPLEVR. The N-terminal 56 residues, 37–92, are a transit peptide targeting the thylakoid; it reads CSSGNTRYTKQRGAFTSLKECAISLALSVGLMVSVPSIALPPNAHAVANPVIPDVS. Residues 245–437 enclose the PPIase cyclophilin-type domain; that stretch reads VKIKDNPNIE…LANPSYKIAG (193 aa).

As to expression, ubiquitous. Lower levels of expression in roots.

The protein localises to the plastid. It localises to the chloroplast thylakoid lumen. The enzyme catalyses [protein]-peptidylproline (omega=180) = [protein]-peptidylproline (omega=0). Functionally, required for the assembly and stabilization of PSII, but has no PPIases activity. This chain is Peptidyl-prolyl cis-trans isomerase CYP38, chloroplastic (CYP38), found in Arabidopsis thaliana (Mouse-ear cress).